The sequence spans 660 residues: MSHVAEEDELGLDQQLAGLDLTSRDSQSGGSTASKGRYIPPHLRNREAAKAFYDKDGSRWSKDKDAYSSFGSRSDTRAKSSFFSDRGGSGSRGRFDERGRSDYESVGSRGGRSGFGKFERGGNSRWCDKADEDDWSKPLPPSERLEQELFSGGNTGINFEKYDDIPVEATGNNCPPHIESFSDVEMGEIIMGNIELTRYTRPTPVQKHAIPIIKEKRDLMACAQTGSGKTAAFLLPILSQIYTDGPGEALRAMKENGKYGRRKQYPISLVLAPTRELAVQIYEEARKFSYRSRVRPCVVYGGADIGQQIRDLERGCHLLVATPGRLVDMMERGKIGLDFCKYLVLDEADRMLDMGFEPQIRRIVEQDTMPPKGVRHTMMFSATFPKEIQMLARDFLDEYIFLAVGRVGSTSENITQKVVWVEEADKRSFLLDLLNATGKDSLILVFVETKKGADSLEDFLYHEGYACTSIHGDRSQRDREEALHQFRSGKSPILVATAVAARGLDISNVKHVINFDLPSDIEEYVHRIGRTGRVGNLGLATSFFNERNINITKDLLDLLVEAKQEVPSWLENMAFEHHYKGGSRGRSKSRFSGGFGARDYRQSSGASSSSFSSGRASNSRSGGGSHGSSRGFGGGSYGGFYNSDGYGGNYSSQGVDWWGN.

Acidic residues predominate over residues 1–11 (MSHVAEEDELG). The segment at 1–117 (MSHVAEEDEL…SRGGRSGFGK (117 aa)) is disordered. Ser2 carries the N-acetylserine modification. Low complexity predominate over residues 12 to 21 (LDQQLAGLDL). Polar residues predominate over residues 24–34 (RDSQSGGSTAS). Residues 44–66 (RNREAAKAFYDKDGSRWSKDKDA) are compositionally biased toward basic and acidic residues. Position 55 is an N6-acetyllysine (Lys55). Residues Ser80, Ser84, and Ser89 each carry the phosphoserine modification. A compositionally biased stretch (basic and acidic residues) spans 93 to 103 (GRFDERGRSDY). An Omega-N-methylarginine modification is found at Arg100. Residue Ser101 is modified to Phosphoserine. Position 103 is a phosphotyrosine (Tyr103). Arg109 bears the Omega-N-methylarginine mark. Lys117 bears the N6-acetyllysine mark. The short motif at 179–207 (ESFSDVEMGEIIMGNIELTRYTRPTPVQK) is the Q motif element. The residue at position 182 (Ser182) is a Phosphoserine. Position 199–206 (199–206 (YTRPTPVQ)) interacts with ATP. A Helicase ATP-binding domain is found at 210–402 (IPIIKEKRDL…RDFLDEYIFL (193 aa)). Lys214 participates in a covalent cross-link: Glycyl lysine isopeptide (Lys-Gly) (interchain with G-Cter in SUMO2). ATP is bound at residue 223-230 (AQTGSGKT). The DEAD box signature appears at 346 to 349 (DEAD). One can recognise a Helicase C-terminal domain in the interval 413–574 (NITQKVVWVE…EVPSWLENMA (162 aa)). At Ser455 the chain carries Phosphoserine. Arg590 carries the post-translational modification Omega-N-methylarginine. Residues Ser592, Ser603, and Ser610 each carry the phosphoserine modification. Residues 598–632 (RDYRQSSGASSSSFSSGRASNSRSGGGSHGSSRGF) form a disordered region. Over residues 602-620 (QSSGASSSSFSSGRASNSR) the composition is skewed to low complexity. 2 positions are modified to omega-N-methylarginine: Arg615 and Arg630. Positions 621 to 632 (SGGGSHGSSRGF) are enriched in gly residues.

This sequence belongs to the DEAD box helicase family. DDX3/DED1 subfamily. Testis.

The catalysed reaction is ATP + H2O = ADP + phosphate + H(+). In terms of biological role, putative ATP-dependent RNA helicase. Possible role in a key step of the spermatogenic process. This Mus musculus (Mouse) protein is Putative ATP-dependent RNA helicase Pl10 (D1Pas1).